We begin with the raw amino-acid sequence, 440 residues long: Trigger factor (440 aa).

Positions 161-257 (GDYVKLAYEG…VLEVRERVLP (97 aa)) constitute a PPIase FKBP-type domain.

This sequence belongs to the FKBP-type PPIase family. Tig subfamily.

It localises to the cytoplasm. It carries out the reaction [protein]-peptidylproline (omega=180) = [protein]-peptidylproline (omega=0). Its function is as follows. Involved in protein export. Acts as a chaperone by maintaining the newly synthesized protein in an open conformation. Functions as a peptidyl-prolyl cis-trans isomerase. The sequence is that of Trigger factor from Opitutus terrae (strain DSM 11246 / JCM 15787 / PB90-1).